Reading from the N-terminus, the 166-residue chain is Phosphopantetheine adenylyltransferase (166 aa).

Residue serine 9 participates in substrate binding. Residues 9–10 and histidine 17 contribute to the ATP site; that span reads SY. Positions 41, 75, and 89 each coordinate substrate. Residues 90-92, glutamate 100, and 124-130 contribute to the ATP site; these read GLR and LEHISSS.

It belongs to the bacterial CoaD family. As to quaternary structure, homohexamer. Requires Mg(2+) as cofactor.

The protein resides in the cytoplasm. The catalysed reaction is (R)-4'-phosphopantetheine + ATP + H(+) = 3'-dephospho-CoA + diphosphate. It functions in the pathway cofactor biosynthesis; coenzyme A biosynthesis; CoA from (R)-pantothenate: step 4/5. Reversibly transfers an adenylyl group from ATP to 4'-phosphopantetheine, yielding dephospho-CoA (dPCoA) and pyrophosphate. The protein is Phosphopantetheine adenylyltransferase of Bifidobacterium longum (strain DJO10A).